A 274-amino-acid chain; its full sequence is Protein-export membrane protein SecF (274 aa).

Helical transmembrane passes span 14–34, 121–141, 143–163, 175–197, 217–237, and 247–267; these read LLIL…ALGV, SVKV…FAIF, KPLL…DALG, ASFA…LSMY, TGIT…LLSM, and VVIF…AWVI.

This sequence belongs to the SecD/SecF family. SecF subfamily. As to quaternary structure, part of the protein translocation apparatus. Forms a complex with SecD.

It localises to the cell membrane. Functionally, involved in protein export. This chain is Protein-export membrane protein SecF, found in Methanopyrus kandleri (strain AV19 / DSM 6324 / JCM 9639 / NBRC 100938).